Consider the following 302-residue polypeptide: Bifunctional protein FolD (302 aa).

Residues 165 to 167, Ser190, and Ile231 contribute to the NADP(+) site; that span reads GRS.

The protein belongs to the tetrahydrofolate dehydrogenase/cyclohydrolase family. As to quaternary structure, homodimer.

It catalyses the reaction (6R)-5,10-methylene-5,6,7,8-tetrahydrofolate + NADP(+) = (6R)-5,10-methenyltetrahydrofolate + NADPH. The enzyme catalyses (6R)-5,10-methenyltetrahydrofolate + H2O = (6R)-10-formyltetrahydrofolate + H(+). It functions in the pathway one-carbon metabolism; tetrahydrofolate interconversion. Functionally, catalyzes the oxidation of 5,10-methylenetetrahydrofolate to 5,10-methenyltetrahydrofolate and then the hydrolysis of 5,10-methenyltetrahydrofolate to 10-formyltetrahydrofolate. This is Bifunctional protein FolD from Prochlorococcus marinus (strain MIT 9303).